The primary structure comprises 75 residues: Small ribosomal subunit protein bS18 (75 aa).

The protein belongs to the bacterial ribosomal protein bS18 family. Part of the 30S ribosomal subunit. Forms a tight heterodimer with protein bS6.

Binds as a heterodimer with protein bS6 to the central domain of the 16S rRNA, where it helps stabilize the platform of the 30S subunit. In Buchnera aphidicola subsp. Cinara cedri (strain Cc), this protein is Small ribosomal subunit protein bS18.